The following is a 261-amino-acid chain: Cytochrome c oxidase subunit 3 (261 aa).

Residues 1–15 (MTHQTHAYHMVNPSP) are Mitochondrial matrix-facing. The chain crosses the membrane as a helical span at residues 16-34 (WPLTGALSALLMTSGLAMW). Topologically, residues 35–40 (FHFNST) are mitochondrial intermembrane. A helical membrane pass occupies residues 41 to 66 (ILLMIGLTTNTLTMYQWWRDVIREST). The Mitochondrial matrix segment spans residues 67–72 (FQGHHT). A helical transmembrane segment spans residues 73-105 (PTVQKGLRYGMILFIISEVLFFTGFFWAFYHSS). The Mitochondrial intermembrane portion of the chain corresponds to 106-128 (LAPTPELGGCWPPTGIHPLNPLE). The chain crosses the membrane as a helical span at residues 129–152 (VPLLNTSVLLASGVSITWAHHSLM). The Mitochondrial matrix portion of the chain corresponds to 153-155 (EGN). Residues 156–183 (RYPMLQALFITIALGVYFTLLQASEYYE) form a helical membrane-spanning segment. Topologically, residues 184-190 (APFTISD) are mitochondrial intermembrane. The helical transmembrane segment at 191-223 (GVYGSTFFVATGFHGLHVIIGSTFLIVCFFRQL) threads the bilayer. The Mitochondrial matrix portion of the chain corresponds to 224–232 (KFHFTSNHH). Residues 233-256 (FGFEAAAWYWHFVDVVWLFLYVSI) traverse the membrane as a helical segment. Residues 257-261 (YWWGS) lie on the Mitochondrial intermembrane side of the membrane.

Belongs to the cytochrome c oxidase subunit 3 family. Component of the cytochrome c oxidase (complex IV, CIV), a multisubunit enzyme composed of 14 subunits. The complex is composed of a catalytic core of 3 subunits MT-CO1, MT-CO2 and MT-CO3, encoded in the mitochondrial DNA, and 11 supernumerary subunits COX4I, COX5A, COX5B, COX6A, COX6B, COX6C, COX7A, COX7B, COX7C, COX8 and NDUFA4, which are encoded in the nuclear genome. The complex exists as a monomer or a dimer and forms supercomplexes (SCs) in the inner mitochondrial membrane with NADH-ubiquinone oxidoreductase (complex I, CI) and ubiquinol-cytochrome c oxidoreductase (cytochrome b-c1 complex, complex III, CIII), resulting in different assemblies (supercomplex SCI(1)III(2)IV(1) and megacomplex MCI(2)III(2)IV(2)).

It localises to the mitochondrion inner membrane. It carries out the reaction 4 Fe(II)-[cytochrome c] + O2 + 8 H(+)(in) = 4 Fe(III)-[cytochrome c] + 2 H2O + 4 H(+)(out). Functionally, component of the cytochrome c oxidase, the last enzyme in the mitochondrial electron transport chain which drives oxidative phosphorylation. The respiratory chain contains 3 multisubunit complexes succinate dehydrogenase (complex II, CII), ubiquinol-cytochrome c oxidoreductase (cytochrome b-c1 complex, complex III, CIII) and cytochrome c oxidase (complex IV, CIV), that cooperate to transfer electrons derived from NADH and succinate to molecular oxygen, creating an electrochemical gradient over the inner membrane that drives transmembrane transport and the ATP synthase. Cytochrome c oxidase is the component of the respiratory chain that catalyzes the reduction of oxygen to water. Electrons originating from reduced cytochrome c in the intermembrane space (IMS) are transferred via the dinuclear copper A center (CU(A)) of subunit 2 and heme A of subunit 1 to the active site in subunit 1, a binuclear center (BNC) formed by heme A3 and copper B (CU(B)). The BNC reduces molecular oxygen to 2 water molecules using 4 electrons from cytochrome c in the IMS and 4 protons from the mitochondrial matrix. This chain is Cytochrome c oxidase subunit 3 (MT-CO3), found in Raphicerus campestris (Steenbok).